An 878-amino-acid polypeptide reads, in one-letter code: Bifunctional heparan sulfate N-deacetylase/N-sulfotransferase 1 (878 aa).

Over 1–17 (MSLSLKTRRFGRPVRPQ) the chain is Cytoplasmic. The interval 1–169 (MSLSLKTRRF…VEYGVGIIGF (169 aa)) is sufficient for localization to Golgi membrane. The chain crosses the membrane as a helical; Signal-anchor for type II membrane protein span at residues 18 to 38 (LVLLLLFALCLLSVFISAYYL). Residues 39 to 878 (YGWKRGLEPS…WLREELQNTR (840 aa)) lie on the Lumenal side of the membrane. The heparan sulfate N-deacetylase 1 stretch occupies residues 40-594 (GWKRGLEPSG…KRHKDIWSKE (555 aa)). N-linked (GlcNAc...) asparagine glycosylation is found at asparagine 231, asparagine 347, and asparagine 397. The segment at 595–878 (KTCDRFPKLL…WLREELQNTR (284 aa)) is heparan sulfate N-sulfotransferase 1. Residue lysine 610 is the For sulfotransferase activity of the active site. 610–614 (KTGTT) is a binding site for adenosine 3',5'-bisphosphate. Asparagine 663 carries N-linked (GlcNAc...) asparagine glycosylation. Residues serine 708 and tryptophan 813 each coordinate adenosine 3',5'-bisphosphate. Cysteine 814 and cysteine 824 are oxidised to a cystine. 829–833 (KGRKY) serves as a coordination point for adenosine 3',5'-bisphosphate.

The protein belongs to the sulfotransferase 1 family. NDST subfamily. In terms of assembly, monomer.

The protein localises to the golgi apparatus membrane. Its subcellular location is the golgi apparatus. It localises to the trans-Golgi network membrane. It catalyses the reaction alpha-D-glucosaminyl-[heparan sulfate](n) + 3'-phosphoadenylyl sulfate = N-sulfo-alpha-D-glucosaminyl-[heparan sulfate](n) + adenosine 3',5'-bisphosphate + 2 H(+). It functions in the pathway glycan metabolism; heparan sulfate biosynthesis. The protein operates within glycan metabolism; heparin biosynthesis. Its function is as follows. Essential bifunctional enzyme that catalyzes both the N-deacetylation and the N-sulfation of glucosamine (GlcNAc) of the glycosaminoglycan in heparan sulfate. Modifies the GlcNAc-GlcA disaccharide repeating sugar backbone to make N-sulfated heparosan, a prerequisite substrate for later modifications in heparin biosynthesis. Plays a role in determining the extent and pattern of sulfation of heparan sulfate. This is Bifunctional heparan sulfate N-deacetylase/N-sulfotransferase 1 (ndst1) from Xenopus laevis (African clawed frog).